We begin with the raw amino-acid sequence, 419 residues long: Elongation factor Tu, chloroplastic (419 aa).

The tr-type G domain maps to 10-214; that stretch reads KPHVNIGTIG…AVDSYIPTPK (205 aa). Residues 19–26 are G1; sequence GHVDHGKT. 19-26 serves as a coordination point for GTP; that stretch reads GHVDHGKT. Residue Thr26 coordinates Mg(2+). The tract at residues 60–64 is G2; the sequence is GITIN. A G3 region spans residues 81-84; the sequence is DCPG. GTP contacts are provided by residues 81-85 and 136-139; these read DCPGH and NKED. The tract at residues 136–139 is G4; that stretch reads NKED. The G5 stretch occupies residues 174–176; sequence SAL.

Belongs to the TRAFAC class translation factor GTPase superfamily. Classic translation factor GTPase family. EF-Tu/EF-1A subfamily.

Its subcellular location is the plastid. It localises to the chloroplast. It carries out the reaction GTP + H2O = GDP + phosphate + H(+). GTP hydrolase that promotes the GTP-dependent binding of aminoacyl-tRNA to the A-site of ribosomes during protein biosynthesis. The sequence is that of Elongation factor Tu, chloroplastic (tufA) from Chara vulgaris (Common stonewort).